A 284-amino-acid polypeptide reads, in one-letter code: 2-dehydro-3-deoxyphosphooctonate aldolase (284 aa).

This sequence belongs to the KdsA family.

Its subcellular location is the cytoplasm. It catalyses the reaction D-arabinose 5-phosphate + phosphoenolpyruvate + H2O = 3-deoxy-alpha-D-manno-2-octulosonate-8-phosphate + phosphate. Its pathway is carbohydrate biosynthesis; 3-deoxy-D-manno-octulosonate biosynthesis; 3-deoxy-D-manno-octulosonate from D-ribulose 5-phosphate: step 2/3. The protein operates within bacterial outer membrane biogenesis; lipopolysaccharide biosynthesis. This is 2-dehydro-3-deoxyphosphooctonate aldolase from Paraburkholderia phymatum (strain DSM 17167 / CIP 108236 / LMG 21445 / STM815) (Burkholderia phymatum).